The sequence spans 729 residues: Circadian input-output histidine kinase CikA (729 aa).

An N-terminal domain region spans residues 1 to 169 (MPQPIFDRIL…QVTTQIRQSL (169 aa)). A GAF domain region spans residues 170–314 (ELPELLKIAV…VEFLTHLSQH (145 aa)). In terms of domain architecture, Histidine kinase spans 366–587 (TMSHELRTPL…TFTVGLPAIS (222 aa)). Histidine 369 carries the post-translational modification Phosphohistidine; by autocatalysis. The interval 613–729 (EGRIVLVSED…GLTSLATSAQ (117 aa)) is psR domain, binds KaiB.

It in the N-terminal section; belongs to the phytochrome family. In terms of assembly, homodimer. Part of the circadian clock (KaiA, KaiB, KaiC, CikA, RpaA, SasA), the composition of which varies during the circadian cycle. KaiA and CikA compete for binding to KaiB(fs). The PsR domain binds the KaiB:KaiC CI complex but poorly to either protein alone. KaiA and CikA bind to the same region of the KaiB(fs) form and therefore compete.

It catalyses the reaction ATP + protein L-histidine = ADP + protein N-phospho-L-histidine.. In terms of biological role, functions in an input pathway to the Kai circadian clock. Senses oxidized quinones via its C-terminal pseudo-receiver domain, providing a link between cell metabolism and the clock. Affects the ratio of phosphorylated to unphosphorylated KaiC, binds quinones via its pseudo-receptor domain. Quinone-binding destabilizes the protein rapidly. Autophosphorylates, does not transfer the phosphate to its pseudo-receiver (PsR) domain. May play a role in cell division. Functionally, also functions in a two-component CikA/RpaA output pathway from the circadian clock, negatively regulating kaiBC expression independently of labA and of sasA. One of three clock output pathways. Dephosphorylates phospho-RpaA, enhanced by KaiB and KaiC, has only modest kinase activity on RpaA. This is Circadian input-output histidine kinase CikA from Thermosynechococcus vestitus (strain NIES-2133 / IAM M-273 / BP-1).